The sequence spans 299 residues: Bifunctional protein FolD (299 aa).

NADP(+) is bound by residues 168–170 (GRS), serine 193, and isoleucine 234.

This sequence belongs to the tetrahydrofolate dehydrogenase/cyclohydrolase family. In terms of assembly, homodimer.

The catalysed reaction is (6R)-5,10-methylene-5,6,7,8-tetrahydrofolate + NADP(+) = (6R)-5,10-methenyltetrahydrofolate + NADPH. It catalyses the reaction (6R)-5,10-methenyltetrahydrofolate + H2O = (6R)-10-formyltetrahydrofolate + H(+). The protein operates within one-carbon metabolism; tetrahydrofolate interconversion. In terms of biological role, catalyzes the oxidation of 5,10-methylenetetrahydrofolate to 5,10-methenyltetrahydrofolate and then the hydrolysis of 5,10-methenyltetrahydrofolate to 10-formyltetrahydrofolate. This chain is Bifunctional protein FolD, found in Bartonella bacilliformis (strain ATCC 35685 / KC583 / Herrer 020/F12,63).